The following is a 2123-amino-acid chain: Bromodomain adjacent to zinc finger domain protein 2B (2123 aa).

7 disordered regions span residues 1 to 129 (MESG…VNGT), 144 to 306 (TPAS…LSQQ), 357 to 402 (PSPD…EMGK), 473 to 534 (NENV…HPHP), 546 to 691 (RGTD…RRVA), 756 to 793 (RAMD…GSAE), and 937 to 960 (ARKK…LNKE). Low complexity predominate over residues 7–46 (LPSSPASSTTPTSSSAPSVASAVSKSSLSTGAASLSSTAS). The segment covering 83–95 (FFPPLLGIPPLFA) has biased composition (pro residues). The span at 100–116 (NHDSSFHSRTSGKSSRN) shows a compositional bias: polar residues. 2 stretches are compositionally biased toward low complexity: residues 147–157 (SSSMGQNQSTS) and 193–216 (ESSS…ISSS). Residues 217-243 (DSDDLEEEEEEDQSVEESEDDDSDSET) are compositionally biased toward acidic residues. Over residues 259–277 (SDPKTDGQKATEKAQERRT) the composition is skewed to basic and acidic residues. 2 stretches are compositionally biased toward low complexity: residues 291 to 306 (PPFQ…LSQQ) and 366 to 379 (NKNT…LTSE). Polar residues predominate over residues 473–502 (NENVSSSTPFSSPVNLSTSGRRAPGSQTPA). Basic and acidic residues predominate over residues 546 to 559 (RGTDSDVPSSKDSE). Positions 560–587 (DSNEDEEEDDEEEDEEDDEDDESDDSQS) are enriched in acidic residues. The segment covering 588–597 (ESDSNSQSDS) has biased composition (low complexity). Positions 598-615 (EGSEDDEEKDQEESDSDT) are enriched in acidic residues. 2 stretches are compositionally biased toward low complexity: residues 628–637 (SSSAKSPPSS) and 671–683 (TSSS…PHSG). The 76-residue stretch at 690–765 (VADDQELRIP…RAMDGRRGRP (76 aa)) folds into the MBD domain. Over residues 756 to 778 (RAMDGRRGRPPNPDRPRAREESR) the composition is skewed to basic and acidic residues. A DDT domain is found at 1004 to 1069 (GTTFSDCLMV…LSAAVCDPGL (66 aa)). 4 disordered regions span residues 1183 to 1260 (RDAS…QTAS), 1396 to 1444 (PPES…KTDA), 1499 to 1526 (TLVT…SSVQ), and 1588 to 1614 (FLTS…AQPV). Residues 1214–1238 (SDYDDDDDDDSDDQADEDEEDEEDK) show a composition bias toward acidic residues. Residues 1239–1248 (DDKKGKKTDI) are compositionally biased toward basic and acidic residues. Residues 1254-1281 (EGDQTASVEELEKQIEKLSKQQSQYRRK) adopt a coiled-coil conformation. Polar residues-rich tracts occupy residues 1408–1422 (NVST…QNSG) and 1430–1444 (PSAT…KTDA). Residues 1505–1515 (SQPPSKSPSPA) are compositionally biased toward pro residues. Residues 1588–1600 (FLTSSVASSKSDS) are compositionally biased toward low complexity. A PHD-type zinc finger spans residues 1886 to 1936 (KVYCQICRKGDNEELLLLCDGCDKGCHTYCHRPKITTIPDGDWFCPACISK). The disordered stretch occupies residues 1949–2013 (VKGKKTNDSK…AESTTSIKKP (65 aa)). The segment covering 1984–1995 (GSKELKKRKMEE) has biased composition (basic and acidic residues). The segment covering 1996 to 2010 (TTSLNLSKAESTTSI) has biased composition (polar residues). A Bromo domain is found at 2015–2119 (KDESRDLALC…KYFEKKWTDT (105 aa)).

Belongs to the WAL family. In terms of assembly, component of the BRF-1 ISWI chromatin remodeling complex, at least composed of SMARCA1 and BAZ2B, which regulates the spacing of histone octamers on the DNA template to facilitate access to DNA. Within the BRF-1 ISWI chromatin remodeling complex interacts with SMARCA1; the interaction is direct. Component of the BRF-5 ISWI chromatin remodeling complex, at least composed of SMARCA5/SNF2H and BAZ2B, which regulates the spacing of histone octamers on the DNA template to facilitate access to DNA. Within the BRF-5 ISWI chromatin remodeling complex interacts with SMARCA5/SNF2H; the interaction is direct. Interacts with acetylated lysine residues on histone H1.4, H2A, H2B, H3 and H4 (in vitro). Interacts with EHMT1.

Its subcellular location is the nucleus. Functionally, regulatory subunit of the ATP-dependent BRF-1 and BRF-5 ISWI chromatin remodeling complexes, which form ordered nucleosome arrays on chromatin and facilitate access to DNA during DNA-templated processes such as DNA replication, transcription, and repair. Both complexes regulate the spacing of nucleosomes along the chromatin and have the ability to slide mononucleosomes to the center of a DNA template. The BRF-1 ISWI chromatin remodeling complex has a lower ATP hydrolysis rate than the BRF-5 ISWI chromatin remodeling complex. Chromatin reader protein, involved in positively modulating the rate of age-related behavioral deterioration. Represses the expression of mitochondrial function-related genes, perhaps by occupying their promoter regions, working in concert with histone methyltransferase EHMT1. This Mus musculus (Mouse) protein is Bromodomain adjacent to zinc finger domain protein 2B.